We begin with the raw amino-acid sequence, 58 residues long: MMNATENQIFVETVSDQELEMLIGGADRGWIKTLTKDCPNVISSICAGTIITACKNCA.

A propeptide spanning residues 1–25 (MMNATENQIFVETVSDQELEMLIGG) is cleaved from the precursor. Residues threonine 33 and threonine 35 each carry the 2,3-didehydrobutyrine modification. 2 consecutive cross-links (beta-methyllanthionine (Thr-Cys)) follow at residues 33-38 (TLTKDC) and 35-57 (TKDCPNVISSICAGTIITACKNC). Cysteine 46 and cysteine 54 are oxidised to a cystine.

Post-translationally, maturation of macedovicin involves the enzymatic dehydration of Thr-33 and Thr-35 into dehydrobutyrine residues, that can form a beta-methyllanthionine bond with Cys-38 and Cys-57, respectively. This is followed by membrane translocation and cleavage of the modified precursor.

The protein resides in the secreted. Lanthionine-containing peptide antibiotic (lantibiotic) active on Gram-positive bacteria. Macedovicin inhibits a broad spectrum of lactic acid bacteria, several food spoilage species (e.g. Clostridium spp.) and oral streptococci. The bactericidal activity of lantibiotics is based on depolarization of energized bacterial cytoplasmic membranes, initiated by the formation of aqueous transmembrane pores. This chain is Lantibiotic macedovicin, found in Streptococcus macedonicus (strain ACA-DC 198).